A 300-amino-acid polypeptide reads, in one-letter code: Tyrosine recombinase XerC (300 aa).

A Core-binding (CB) domain is found at 1 to 86 (MESVLDAFDQ…AVKTFTAWAV (86 aa)). One can recognise a Tyr recombinase domain in the interval 107-294 (TLPAVLRQDQ…TVARLRAVHD (188 aa)). Active-site residues include R151, K175, H246, R249, and H272. Residue Y281 is the O-(3'-phospho-DNA)-tyrosine intermediate of the active site.

The protein belongs to the 'phage' integrase family. XerC subfamily. In terms of assembly, forms a cyclic heterotetrameric complex composed of two molecules of XerC and two molecules of XerD.

It is found in the cytoplasm. Its function is as follows. Site-specific tyrosine recombinase, which acts by catalyzing the cutting and rejoining of the recombining DNA molecules. The XerC-XerD complex is essential to convert dimers of the bacterial chromosome into monomers to permit their segregation at cell division. It also contributes to the segregational stability of plasmids. The protein is Tyrosine recombinase XerC of Mycobacterium sp. (strain JLS).